A 108-amino-acid chain; its full sequence is CRISPR-associated endoribonuclease Cas2 (108 aa).

Position 15 (Asp-15) interacts with Mg(2+).

This sequence belongs to the CRISPR-associated endoribonuclease Cas2 protein family. In terms of assembly, homodimer, forms a heterotetramer with a Cas1 homodimer. Requires Mg(2+) as cofactor.

CRISPR (clustered regularly interspaced short palindromic repeat), is an adaptive immune system that provides protection against mobile genetic elements (viruses, transposable elements and conjugative plasmids). CRISPR clusters contain sequences complementary to antecedent mobile elements and target invading nucleic acids. CRISPR clusters are transcribed and processed into CRISPR RNA (crRNA). Functions as a ssRNA-specific endoribonuclease. Involved in the integration of spacer DNA into the CRISPR cassette. This chain is CRISPR-associated endoribonuclease Cas2, found in Paracidovorax avenae (strain ATCC 19860 / DSM 7227 / CCUG 15838 / JCM 20985 / LMG 2117 / NCPPB 1011) (Acidovorax avenae).